A 153-amino-acid chain; its full sequence is Small ribosomal subunit protein uS19 (153 aa).

Positions 1 to 63 are unknown; that stretch reads MGFRGAWNKR…QEIWDEFRAF (63 aa). The small ribosomal subunit protein uS19 stretch occupies residues 64–153; sequence VNKKAWVDPK…EKSAKVVKKK (90 aa).

This sequence belongs to the universal ribosomal protein uS19 family.

Its function is as follows. Protein S19 forms a complex with S13 that binds strongly to the 16S ribosomal RNA. The sequence is that of Small ribosomal subunit protein uS19 from Hydrogenobaculum sp. (strain Y04AAS1).